Reading from the N-terminus, the 186-residue chain is Casparian strip membrane protein 1 (186 aa).

The Cytoplasmic portion of the chain corresponds to 1–26 (MKGGSIELGEVSKNASTNKGVKRGLS). The helical transmembrane segment at 27–47 (IMDFILRIIAGVATLASAVAM) threads the bilayer. Over 48–72 (GTTDERLPFATSFVQFRAEYDDLPS) the chain is Extracellular. Residues 73-93 (FVFFVLANSIVCGYLALSLIL) form a helical membrane-spanning segment. Residues 94–107 (SILHIVRSTAVKSR) lie on the Cytoplasmic side of the membrane. A helical transmembrane segment spans residues 108 to 128 (ILLIVLDMVMMGLLAAAASAA). Residues 129 to 157 (ASIVYIAHYGNTQANWFPICQQYNSFCER) lie on the Extracellular side of the membrane. Residues 158 to 178 (ISGSLIGSYIAVALFIIIILL) traverse the membrane as a helical segment. Topologically, residues 179-186 (SQSAISRN) are cytoplasmic.

It belongs to the Casparian strip membrane proteins (CASP) family. In terms of assembly, homodimer and heterodimers.

Its subcellular location is the cell membrane. Functionally, regulates membrane-cell wall junctions and localized cell wall deposition. Required for establishment of the Casparian strip membrane domain (CSD) and the subsequent formation of Casparian strips, a cell wall modification of the root endodermis that determines an apoplastic barrier between the intraorganismal apoplasm and the extraorganismal apoplasm and prevents lateral diffusion. The sequence is that of Casparian strip membrane protein 1 from Medicago truncatula (Barrel medic).